Consider the following 436-residue polypeptide: F-box/LRR-repeat protein At2g40920 (436 aa).

The 51-residue stretch at 48 to 98 (EYLLQNFDLDHVMEILMRFPLTSLTRFKCVSKQWSSLISSRYFCNLLYTTV) folds into the F-box domain. LRR repeat units follow at residues 276–301 (NCVV…IHLD) and 393–416 (YYNL…WFDK).

This Arabidopsis thaliana (Mouse-ear cress) protein is F-box/LRR-repeat protein At2g40920.